The chain runs to 324 residues: Thiamine thiazole synthase (324 aa).

Residues Cys-86, 107-108, Gly-115, and Val-180 each bind substrate; that span reads EA. A 2,3-didehydroalanine (Cys) modification is found at Cys-213. Substrate-binding positions include Asp-215, His-230, Met-282, and 292–294; that span reads RMG.

It belongs to the THI4 family. Homooctamer. Fe cation is required as a cofactor. Post-translationally, during the catalytic reaction, a sulfide is transferred from Cys-213 to a reaction intermediate, generating a dehydroalanine residue.

The protein localises to the cytoplasm. Its subcellular location is the nucleus. The catalysed reaction is [ADP-thiazole synthase]-L-cysteine + glycine + NAD(+) = [ADP-thiazole synthase]-dehydroalanine + ADP-5-ethyl-4-methylthiazole-2-carboxylate + nicotinamide + 3 H2O + 2 H(+). Functionally, involved in biosynthesis of the thiamine precursor thiazole. Catalyzes the conversion of NAD and glycine to adenosine diphosphate 5-(2-hydroxyethyl)-4-methylthiazole-2-carboxylic acid (ADT), an adenylated thiazole intermediate. The reaction includes an iron-dependent sulfide transfer from a conserved cysteine residue of the protein to a thiazole intermediate. The enzyme can only undergo a single turnover, which suggests it is a suicide enzyme. May have additional roles in adaptation to various stress conditions and in DNA damage tolerance. The chain is Thiamine thiazole synthase (sti35) from Fusarium solani subsp. phaseoli (Nectria haematococca).